The sequence spans 917 residues: Calcium-activated chloride channel regulator 1 (917 aa).

Positions 1–21 (MGSFRSSLFILVLHLLEGAQS) are cleaved as a signal peptide. A metalloprotease domain region spans residues 46 to 199 (DERLIQNIKD…AIRGTNVLPQ (154 aa)). Histidine 156 contacts Zn(2+). Glutamate 157 is a catalytic residue. Zn(2+) contacts are provided by histidine 160 and asparagine 167. Positions 306 to 475 (IVCLVLDKSG…NGLIDAFGAL (170 aa)) constitute a VWFA domain. Residues asparagine 503, asparagine 772, asparagine 806, asparagine 812, asparagine 838, and asparagine 893 are each glycosylated (N-linked (GlcNAc...) asparagine).

This sequence belongs to the CLCR family. Glycosylated. Post-translationally, the translation product is autoproteolytically cleaved by the metalloprotease domain in the endoplasmic reticulum into a N-terminal and a C-terminal products that remain physically associated with each other. The cleavage is necessary for calcium-activated chloride channel (CaCC) activation activity. As to expression, expressed in ileum, trachea, and the major salivary glands. In ileum, expressed to the crypt and villus epithelia, whereas in trachea expressed in both surface epithelium and submucosal glands.

It is found in the secreted. It localises to the extracellular space. Functionally, may be involved in mediating calcium-activated chloride conductance. May play critical roles in goblet cell metaplasia, mucus hypersecretion, cystic fibrosis and AHR. May be involved in the regulation of mucus production and/or secretion by goblet cells. Involved in the regulation of tissue inflammation in the innate immune response. May play a role as a tumor suppressor. Induces MUC5AC. Induces a cAMP-dependent chloride conductance possibly through effects on CFTR in colon carcinoma cells. This is Calcium-activated chloride channel regulator 1 (CLCA1) from Sus scrofa (Pig).